We begin with the raw amino-acid sequence, 711 residues long: Zinc finger CCCH domain-containing protein 32 (711 aa).

Low complexity predominate over residues 1–21 (MEADGAAAAAAAGEASTEAGA). Residues 1–23 (MEADGAAAAAAAGEASTEAGARP) are disordered. 3 C3H1-type zinc fingers span residues 31-60 (LRRN…HSDN), 62-88 (RMNP…HPPI), and 112-139 (GKQL…HGPQ). 4 disordered regions span residues 221 to 246 (KSEK…GDHP), 339 to 376 (RFNG…HSER), 405 to 561 (SSLA…EGPK), and 573 to 701 (AAWA…DDDD). Basic and acidic residues-rich tracts occupy residues 364–376 (SERS…HSER) and 413–427 (RNGE…YRER). Residues 428–437 (AHGHRSHRDH) are compositionally biased toward basic residues. 2 stretches are compositionally biased toward basic and acidic residues: residues 460-509 (SPDR…RRSS) and 585-594 (KQDKSAEVSH). Acidic residues-rich tracts occupy residues 648 to 663 (EDII…DADN) and 686 to 701 (ENAY…DDDD).

In Oryza sativa subsp. japonica (Rice), this protein is Zinc finger CCCH domain-containing protein 32.